The chain runs to 99 residues: Protein IDA-LIKE 3 (99 aa).

Positions 1–32 (MSSRSHRSRKYQLTRTIPILVLLLVLLSCCNG) are cleaved as a signal peptide. Residues 36–45 (TNVFNTSSPP) show a composition bias toward polar residues. 2 disordered regions span residues 36–58 (TNVF…HDHV) and 73–99 (SLPR…STKT). Residues 46–58 (KQKDVVSPPHDHV) show a composition bias toward basic and acidic residues.

As to expression, expressed in flowers and seedlings. Detected at the base of pedicel, in the floral abscission zone and in vascular tissues.

The protein localises to the secreted. It is found in the extracellular space. Functionally, may be involved in floral abscission. This is Protein IDA-LIKE 3 (IDL3) from Arabidopsis thaliana (Mouse-ear cress).